The chain runs to 479 residues: ATP-dependent RNA helicase DDX19B (479 aa).

N-acetylalanine is present on Ala-2. Positions 2 to 300 (ATDSWALAVD…DPNVIKLKRE (299 aa)) are N-terminal lobe. The interval 34 to 54 (TNGAVVKTNANAEKTDEEEKE) is disordered. The segment at 55–68 (DRAAQSLLNKLIRS) is N-terminal helix. The Q motif signature appears at 92–120 (KSFEELRLKPQLLQGVYAMGFNRPSKIQE). ATP-binding positions include Gln-119 and 138-145 (SQSGTGKT). Residues 125-295 (LMLAEPPQNL…QKVVPDPNVI (171 aa)) form the Helicase ATP-binding domain. A DEAD box motif is present at residues 242-245 (DEAD). Residues 301-479 (EETLDTIKQY…DLDEIEKIAN (179 aa)) form a C-terminal lobe region. The 169-residue stretch at 306-474 (TIKQYYVLCS…RLDTDDLDEI (169 aa)) folds into the Helicase C-terminal domain. Positions 429 and 432 each coordinate ATP.

Belongs to the DEAD box helicase family. DDX19/DBP5 subfamily. Associates with the nuclear pore complex via interaction with NUP214. Interacts with NUP214 or RNA in a mutually exclusive manner.

Its subcellular location is the cytoplasm. The protein localises to the nucleus. The protein resides in the nucleoplasm. It carries out the reaction ATP + H2O = ADP + phosphate + H(+). Functionally, ATP-dependent RNA helicase involved in mRNA export from the nucleus. Rather than unwinding RNA duplexes, DDX19B functions as a remodeler of ribonucleoprotein particles, whereby proteins bound to nuclear mRNA are dissociated and replaced by cytoplasmic mRNA binding proteins. The protein is ATP-dependent RNA helicase DDX19B (DDX19B) of Homo sapiens (Human).